The primary structure comprises 379 residues: DnaJ homolog subfamily B member 14 (379 aa).

The Cytoplasmic segment spans residues 1-244 (MEGNRDEAEK…GHEREEERAD (244 aa)). A disordered region spans residues 56-90 (TAGSSTHCRKPPGSSDQSKPSCGKDGTSGAGEGGK). Positions 108-172 (NYYEVLGVTK…EKRKQYDLTG (65 aa)) constitute a J domain. A helical membrane pass occupies residues 245 to 265 (GGFSVFIQLMPIIVLILVSLL). Residues 266–379 (SQLMVSNPPY…ERLTSLYKGG (114 aa)) are Lumenal-facing.

It belongs to the DnaJ family. DNAJB12/DNAJB14 subfamily. In terms of assembly, interacts (via J domain) with HSPA8/Hsc70. Forms a multiprotein complex, at least composed of DNAJB12, DNAJB14, HSPA8/Hsc70 and SGTA; interaction with DNAJB14 and HSPA8/Hsc70 is direct.

Its subcellular location is the endoplasmic reticulum membrane. The protein localises to the nucleus membrane. Functionally, acts as a co-chaperone with HSPA8/Hsc70; required to promote protein folding and trafficking, prevent aggregation of client proteins, and promote unfolded proteins to endoplasmic reticulum-associated degradation (ERAD) pathway. Acts by determining HSPA8/Hsc70's ATPase and polypeptide-binding activities. Can also act independently of HSPA8/Hsc70: together with DNAJB12, acts as a chaperone that promotes maturation of potassium channels KCND2 and KCNH2 by stabilizing nascent channel subunits and assembling them into tetramers. While stabilization of nascent channel proteins is dependent on HSPA8/Hsc70, the process of oligomerization of channel subunits is independent of HSPA8/Hsc70. When overexpressed, forms membranous structures together with DNAJB12 and HSPA8/Hsc70 within the nucleus; the role of these structures, named DJANGOs, is still unclear. The protein is DnaJ homolog subfamily B member 14 of Mus musculus (Mouse).